The chain runs to 213 residues: Thymidylate kinase (213 aa).

Position 9-16 (9-16 (GVEGCGKT)) interacts with ATP.

It belongs to the thymidylate kinase family.

The catalysed reaction is dTMP + ATP = dTDP + ADP. Phosphorylation of dTMP to form dTDP in both de novo and salvage pathways of dTTP synthesis. The chain is Thymidylate kinase from Geotalea uraniireducens (strain Rf4) (Geobacter uraniireducens).